The sequence spans 383 residues: Succinyl-diaminopimelate desuccinylase (383 aa).

Zn(2+) is bound at residue histidine 72. Aspartate 74 is an active-site residue. Residue aspartate 105 participates in Zn(2+) binding. The active-site Proton acceptor is the glutamate 139. Zn(2+) is bound by residues glutamate 140, glutamate 168, and histidine 356.

Belongs to the peptidase M20A family. DapE subfamily. As to quaternary structure, homodimer. Zn(2+) is required as a cofactor. It depends on Co(2+) as a cofactor.

The enzyme catalyses N-succinyl-(2S,6S)-2,6-diaminopimelate + H2O = (2S,6S)-2,6-diaminopimelate + succinate. The protein operates within amino-acid biosynthesis; L-lysine biosynthesis via DAP pathway; LL-2,6-diaminopimelate from (S)-tetrahydrodipicolinate (succinylase route): step 3/3. Catalyzes the hydrolysis of N-succinyl-L,L-diaminopimelic acid (SDAP), forming succinate and LL-2,6-diaminopimelate (DAP), an intermediate involved in the bacterial biosynthesis of lysine and meso-diaminopimelic acid, an essential component of bacterial cell walls. This Beijerinckia indica subsp. indica (strain ATCC 9039 / DSM 1715 / NCIMB 8712) protein is Succinyl-diaminopimelate desuccinylase.